A 308-amino-acid polypeptide reads, in one-letter code: Phenylcoumaran benzylic ether reductase 1 (308 aa).

NADP(+)-binding positions include 11-17 (GGTGYIG), R36, and R45. K133 acts as the Proton acceptor in catalysis. NADP(+) is bound at residue R137.

Belongs to the NmrA-type oxidoreductase family. Isoflavone reductase subfamily. In terms of tissue distribution, expressed in apical meristem and cotyledon veins of young seedlings. Expressed in vascular tissues of roots, leaves, stems and petals. Expressed in pollen grains. Expressed at low levels in cauline leaves and siliques.

It catalyses the reaction (-)-dehydrodiconiferyl alcohol + NADPH + H(+) = (S)-isodihydrodehydrodiconiferyl alcohol + NADP(+). It carries out the reaction (+)-dehydrodiconiferyl alcohol + NADPH + H(+) = (R)-isodihydrodehydrodiconiferyl alcohol + NADP(+). The enzyme catalyses (2R,3S)-dihydrodehydrodiconiferyl alcohol + NADPH + H(+) = (S)-tetrahydrodehydrodiconiferyl alcohol + NADP(+). The catalysed reaction is (2S,3R)-dihydrodehydrodiconiferyl alcohol + NADPH + H(+) = (R)-tetrahydrodehydrodiconiferyl alcohol + NADP(+). In terms of biological role, oxidoreductase involved in lignan biosynthesis. Catalyzes the NADPH-dependent reduction of phenylcoumaran benzylic ethers. Converts dehydrodiconiferyl alcohol (DDC) to isodihydrodehydrodiconiferyl alcohol (IDDDC), and dihydrodehydrodiconiferyl alcohol (DDDC) to tetrahydrodehydrodiconiferyl alcohol (TDDC). Plays an important role in the biosynthesis of secondary metabolites. In addition to the 8-5'-linked neolignan DDC, can reduce the 8-8'-linked lignans, pinoresinol, and lariciresinol, but with lower activities. The sequence is that of Phenylcoumaran benzylic ether reductase 1 from Arabidopsis thaliana (Mouse-ear cress).